The following is a 228-amino-acid chain: Caspase recruitment domain-containing protein 19 (228 aa).

Cysteine 7 and cysteine 77 are oxidised to a cystine. Residues aspartate 8–histidine 99 enclose the CARD domain. At valine 113 the chain carries Phosphoserine.

As to quaternary structure, associates with BCL10 by CARD-CARD interaction. As to expression, expressed in ovary, testis, placenta, skeletal muscle, kidney, lung, heart and liver (at protein level). Expressed in thymus and brain.

It is found in the nucleus. The protein resides in the endoplasmic reticulum membrane. It localises to the mitochondrion membrane. Functionally, plays a role in inhibiting the effects of BCL10-induced activation of NF-kappa-B. May inhibit the phosphorylation of BCL10 in a CARD-dependent manner. The protein is Caspase recruitment domain-containing protein 19 (CARD19) of Homo sapiens (Human).